Here is a 180-residue protein sequence, read N- to C-terminus: Stathmin-3 (180 aa).

2 S-palmitoyl cysteine lipidation sites follow: cysteine 22 and cysteine 24. One can recognise an SLD domain in the interval glycine 38 to glycine 180. Phosphoserine occurs at positions 50, 60, 65, 68, 72, 73, and 81. Residues lysine 59–leucine 82 form a disordered region. The span at serine 60–proline 74 shows a compositional bias: low complexity. The stretch at proline 75–serine 179 forms a coiled coil.

This sequence belongs to the stathmin family. As to quaternary structure, interacts with STAT3. Interacts with CLU (secreted form); this interaction may act as an important modulator during neuronal differentiation. In terms of processing, N-terminal palmitoylation promotes specific anchoring to the cytosolic leaflet of Golgi membranes and subsequent vesicular trafficking along dendrites and axons. Neuronal Stathmins are substrates for palmitoyltransferases ZDHHC3, ZDHHC7 and ZDHHC15. Neuron specific.

The protein localises to the golgi apparatus. It localises to the cell projection. The protein resides in the growth cone. It is found in the axon. Its subcellular location is the cytoplasm. The protein localises to the cytosol. Its function is as follows. Exhibits microtubule-destabilizing activity, which is antagonized by STAT3. The sequence is that of Stathmin-3 (STMN3) from Homo sapiens (Human).